A 546-amino-acid polypeptide reads, in one-letter code: Sterol O-acyltransferase 1 (546 aa).

Residue Met-1 is modified to N-acetylmethionine. The interval 1-37 (MVGEEKMSLRNRLSKSGENPEQDEAQRSVSDTQSNGR) is disordered. The Cytoplasmic segment spans residues 1–134 (MVGEEKMSLR…LDELFEVDHI (134 aa)). The residue at position 8 (Ser-8) is a Phosphoserine. Polar residues predominate over residues 27-37 (RSVSDTQSNGR). His-133 lines the cholesterol pocket. The chain crosses the membrane as a helical span at residues 135 to 156 (RTIYHMFIGLLILFILSTLVVD). The Lumenal portion of the chain corresponds to 157-176 (YIDEGRLVLEFNLLGYAFGK). A helical membrane pass occupies residues 177 to 202 (LPTVIWTWWAMFLSTLSIPYFLFQRW). The Cytoplasmic portion of the chain corresponds to 203–214 (AHGYSKTSHPLI). Residues 215 to 240 (YSLSHGFFFLVFQLGILGFVPTYVVL) form a helical membrane-spanning segment. Topologically, residues 241–248 (AYTLPPAS) are lumenal. The chain crosses the membrane as a helical span at residues 249-272 (RFIVILEQIRMVMKAHSFVRENVP). Over 273 to 315 (RVLNAAKEKSSTVPVPTVNQYLYFLFAPTLIYRDSYPRTPTVR) the chain is Cytoplasmic. Residues 316 to 348 (WGYVAVQFLQVFGCLFYVYYIFERLCAPLFRNI) form a helical membrane-spanning segment. Residues 349 to 365 (KQEPFSARVLVLCVFNS) are Lumenal-facing. Residues 366–391 (ILPGVLMLFLTFFAFLHCWLNAFAEM) traverse the membrane as a helical segment. Residues 392 to 439 (LRFGDRMFYKDWWNSTSYSNYYRTWNVVVHDWLYYYAYKDLLWFFSKR) are Cytoplasmic-facing. The FYXDWWN motif signature appears at 399 to 405 (FYKDWWN). Residues Asn-411, Arg-414, Asn-417, His-421, Tyr-429, Lys-441, and Ser-452 each coordinate an acyl-CoA. A helical membrane pass occupies residues 440–464 (FKSAAMLAVFALSAVVHEYALAVCL). Residue His-456 is part of the active site. The Lumenal portion of the chain corresponds to 465–470 (SYFYPV). A helical membrane pass occupies residues 471 to 486 (LFVLFMFFGMAFNFIV). Residues 487 to 492 (NDSRKR) are Cytoplasmic-facing. Residues 493–524 (PIWNIMVWASLFLGHGVILCFYSQEWYARQHC) traverse the membrane as a helical segment. Cys-524 and Cys-542 are disulfide-bonded. Residues 525 to 546 (PLKNPTFLDYVRPRSWTCQYVF) are Lumenal-facing.

Belongs to the membrane-bound acyltransferase family. Sterol o-acyltransferase subfamily. May form homo- or heterodimers. Interacts with UBIAD1.

Its subcellular location is the endoplasmic reticulum membrane. It carries out the reaction a sterol + a long-chain fatty acyl-CoA = a long-chain 3-hydroxysterol ester + CoA. It catalyses the reaction cholesterol + an acyl-CoA = a cholesterol ester + CoA. The catalysed reaction is cholesterol + (9Z)-octadecenoyl-CoA = cholesteryl (9Z-octadecenoate) + CoA. The enzyme catalyses cholesterol + hexadecanoyl-CoA = cholesteryl hexadecanoate + CoA. It carries out the reaction octadecanoyl-CoA + cholesterol = cholesteryl octadecanoate + CoA. It catalyses the reaction (9Z,12Z)-octadecadienoyl-CoA + cholesterol = cholesteryl (9Z,12Z)-octadecadienoate + CoA. The catalysed reaction is (5Z,8Z,11Z,14Z)-eicosatetraenoyl-CoA + cholesterol = cholesteryl (5Z,8Z,11Z,14Z)-eicosatetraenoate + CoA. The enzyme catalyses (9Z)-hexadecenoyl-CoA + cholesterol = cholesteryl (9Z)-hexadecenoate + CoA. It carries out the reaction (11Z)-octadecenoyl-CoA + cholesterol = cholesteryl (11Z)-octadecenoate + CoA. It catalyses the reaction (7Z)-octadecenoyl-CoA + cholesterol = cholesteryl (7Z)-octadecenoate + CoA. In terms of biological role, catalyzes the formation of fatty acid-cholesterol esters, which are less soluble in membranes than cholesterol. Plays a role in lipoprotein assembly and dietary cholesterol absorption. Preferentially utilizes oleoyl-CoA ((9Z)-octadecenoyl-CoA) as a substrate: shows a higher activity towards an acyl-CoA substrate with a double bond at the delta-9 position (9Z) than towards saturated acyl-CoA or an unsaturated acyl-CoA with a double bond at the delta-7 (7Z) or delta-11 (11Z) positions. The sequence is that of Sterol O-acyltransferase 1 (SOAT1) from Cricetulus griseus (Chinese hamster).